A 360-amino-acid chain; its full sequence is A-type ATP synthase subunit C (360 aa).

Positions 1–23 are disordered; that stretch reads MRLLERLWGKKPSRKSDKKKKGT. Residues 9-22 are compositionally biased toward basic residues; it reads GKKPSRKSDKKKKG.

It belongs to the V-ATPase V0D/AC39 subunit family. In terms of assembly, has multiple subunits with at least A(3), B(3), C, D, E, F, H, I and proteolipid K(x).

It localises to the cell membrane. Component of the A-type ATP synthase that produces ATP from ADP in the presence of a proton gradient across the membrane. The sequence is that of A-type ATP synthase subunit C from Methanosarcina acetivorans (strain ATCC 35395 / DSM 2834 / JCM 12185 / C2A).